A 208-amino-acid chain; its full sequence is UPF0637 protein BCB4264_A4063 (208 aa).

It belongs to the UPF0637 family.

The polypeptide is UPF0637 protein BCB4264_A4063 (Bacillus cereus (strain B4264)).